We begin with the raw amino-acid sequence, 546 residues long: Chaperonin GroEL (546 aa).

ATP contacts are provided by residues 30–33, Lys-51, 87–91, Gly-415, and Asp-497; these read TLGP and DGTTT. Residues 527–546 are disordered; that stretch reads PKKDSPAPAMPGGGMGGMDF. Residues 537 to 546 are compositionally biased toward gly residues; it reads PGGGMGGMDF.

It belongs to the chaperonin (HSP60) family. In terms of assembly, forms a cylinder of 14 subunits composed of two heptameric rings stacked back-to-back. Interacts with the co-chaperonin GroES.

Its subcellular location is the cytoplasm. The catalysed reaction is ATP + H2O + a folded polypeptide = ADP + phosphate + an unfolded polypeptide.. Together with its co-chaperonin GroES, plays an essential role in assisting protein folding. The GroEL-GroES system forms a nano-cage that allows encapsulation of the non-native substrate proteins and provides a physical environment optimized to promote and accelerate protein folding. This Methylobacterium radiotolerans (strain ATCC 27329 / DSM 1819 / JCM 2831 / NBRC 15690 / NCIMB 10815 / 0-1) protein is Chaperonin GroEL.